A 34-amino-acid polypeptide reads, in one-letter code: Photosystem II reaction center protein M (34 aa).

A helical transmembrane segment spans residues 5-25; it reads ILAFIATALFILVPTAFLLII.

It belongs to the PsbM family. In terms of assembly, PSII is composed of 1 copy each of membrane proteins PsbA, PsbB, PsbC, PsbD, PsbE, PsbF, PsbH, PsbI, PsbJ, PsbK, PsbL, PsbM, PsbT, PsbX, PsbY, PsbZ, Psb30/Ycf12, at least 3 peripheral proteins of the oxygen-evolving complex and a large number of cofactors. It forms dimeric complexes.

The protein resides in the plastid. It localises to the chloroplast thylakoid membrane. Functionally, one of the components of the core complex of photosystem II (PSII). PSII is a light-driven water:plastoquinone oxidoreductase that uses light energy to abstract electrons from H(2)O, generating O(2) and a proton gradient subsequently used for ATP formation. It consists of a core antenna complex that captures photons, and an electron transfer chain that converts photonic excitation into a charge separation. This subunit is found at the monomer-monomer interface. The polypeptide is Photosystem II reaction center protein M (Calycanthus floridus var. glaucus (Eastern sweetshrub)).